The sequence spans 273 residues: Large ribosomal subunit protein uL2cz/uL2cy (273 aa).

Disordered regions lie at residues 1–20 and 225–273; these read MAKH…TIDR and PVDH…RRRK.

This sequence belongs to the universal ribosomal protein uL2 family. As to quaternary structure, part of the 50S ribosomal subunit.

It localises to the plastid. The protein resides in the chloroplast. The sequence is that of Large ribosomal subunit protein uL2cz/uL2cy (rpl2-A) from Oryza nivara (Indian wild rice).